Reading from the N-terminus, the 215-residue chain is uncharacterized protein (215 aa).

This is an uncharacterized protein from Methanocaldococcus jannaschii (strain ATCC 43067 / DSM 2661 / JAL-1 / JCM 10045 / NBRC 100440) (Methanococcus jannaschii).